Consider the following 122-residue polypeptide: Large ribosomal subunit protein eL31 (122 aa).

Belongs to the eukaryotic ribosomal protein eL31 family.

This is Large ribosomal subunit protein eL31 from Caenorhabditis elegans.